The sequence spans 127 residues: uncharacterized protein (127 aa).

Helical transmembrane passes span 64–84 (GYYI…FGYL) and 101–118 (FFHF…AIYY).

It localises to the membrane. This is an uncharacterized protein from Saccharomyces cerevisiae (strain ATCC 204508 / S288c) (Baker's yeast).